We begin with the raw amino-acid sequence, 462 residues long: Malonyl-coenzyme:anthocyanin 5-O-glucoside-6'''-O-malonyltransferase (462 aa).

Active-site proton acceptor residues include His167 and Asp390.

The protein belongs to the plant acyltransferase family. Detected in petals and sepals, and at lower levels in bracts and red stems.

The enzyme catalyses pelargonidin 3-O-(6-O-[(E)-caffeoyl]-beta-D-glucoside) 5-O-beta-D-glucoside + malonyl-CoA = 4'''-demalonylsalvianin + CoA. Its pathway is pigment biosynthesis; anthocyanin biosynthesis. With respect to regulation, completely inhibited by 10 mM p-coumaric acid, this inhibition is rapid, reversible and non-competitive. Completely inhibited by 0.1 mM Cu(2+), 0.1 mM Hg(2+) and 10 mM caffeic acid. Partially inhibited by 5 mM N-ethylmaleimide, 1 mM diethylpyrocarbonate and 1 mM acetyl-CoA. Its function is as follows. Catalyzes the transfer of a malonyl group from malonyl-CoA to the 6'''-hydroxyl group of the 5-glucosyl moiety of anthocyanins. Active towards bisdemalonylsalvianin (pelargonidin 3-O-(6-caffeoyl-beta-D-glucoside) 5-O-beta-D-glucoside) and shisonin, but not towards nodemalonylsalvianin, salvianin, pelargonidin 3,5-diglucoside and delphinidin 3,5-diglucoside. The sequence is that of Malonyl-coenzyme:anthocyanin 5-O-glucoside-6'''-O-malonyltransferase from Salvia splendens (Scarlet sage).